Here is a 723-residue protein sequence, read N- to C-terminus: Threonine--tRNA ligase 1, cytoplasmic (723 aa).

Positions 1 to 10 are enriched in polar residues; it reads MSEEQASSPS. Positions 1–49 are disordered; it reads MSEEQASSPSAKMGDEEKPVGAGEEKQKEGSKKKNKEGSGDGGRAELNP. Residues 13–39 show a composition bias toward basic and acidic residues; it reads MGDEEKPVGAGEEKQKEGSKKKNKEGS. The residue at position 39 (Ser-39) is a Phosphoserine. A TGS domain is found at 79–143; it reads DSKPIKVTLP…EEDCTLELLK (65 aa). Residue Lys-243 is modified to N6-acetyllysine. Thr-246 is subject to Phosphothreonine. Tyr-298 carries the phosphotyrosine modification. Thr-453 is subject to Phosphothreonine. Phosphoserine is present on Ser-702.

The protein belongs to the class-II aminoacyl-tRNA synthetase family. As to quaternary structure, homodimer. Post-translationally, ISGylated.

It localises to the cytoplasm. It carries out the reaction tRNA(Thr) + L-threonine + ATP = L-threonyl-tRNA(Thr) + AMP + diphosphate + H(+). In terms of biological role, catalyzes the attachment of threonine to tRNA(Thr) in a two-step reaction: threonine is first activated by ATP to form Thr-AMP and then transferred to the acceptor end of tRNA(Thr). Also edits incorrectly charged tRNA(Thr) via its editing domain, at the post-transfer stage. The polypeptide is Threonine--tRNA ligase 1, cytoplasmic (TARS1) (Bos taurus (Bovine)).